The following is a 365-amino-acid chain: Putative F-box/kelch-repeat protein At3g16880 (365 aa).

One can recognise an F-box domain in the interval 1–47; it reads MTKMSKLPNDLLEEILSRSPLYSMRAIRLTCKKWNTLAKEESFTKKQ. 2 Kelch repeats span residues 98–149 and 155–205; these read RVYH…TKKS and ILSS…VKGN.

This Arabidopsis thaliana (Mouse-ear cress) protein is Putative F-box/kelch-repeat protein At3g16880.